Here is a 316-residue protein sequence, read N- to C-terminus: UDP-N-acetylenolpyruvoylglucosamine reductase (316 aa).

Residues 27–225 (VGGKAERFYR…KTAINALLKK (199 aa)) form the FAD-binding PCMH-type domain. R190 is an active-site residue. The Proton donor role is filled by S239. E309 is an active-site residue.

It belongs to the MurB family. Requires FAD as cofactor.

It is found in the cytoplasm. It catalyses the reaction UDP-N-acetyl-alpha-D-muramate + NADP(+) = UDP-N-acetyl-3-O-(1-carboxyvinyl)-alpha-D-glucosamine + NADPH + H(+). It participates in cell wall biogenesis; peptidoglycan biosynthesis. Its function is as follows. Cell wall formation. In Coxiella burnetii (strain CbuK_Q154) (Coxiella burnetii (strain Q154)), this protein is UDP-N-acetylenolpyruvoylglucosamine reductase.